A 418-amino-acid chain; its full sequence is Voltage-gated ClC-type chloride channel ClcB (418 aa).

10 helical membrane-spanning segments follow: residues 5–25 (LLIA…FRHA), 54–74 (LLTP…WQKF), 146–166 (LWIA…PLAG), 168–188 (LFIA…PVII), 222–242 (ALII…LTLM), 260–280 (LALG…VWGN), 291–311 (APPL…AVLA), 316–336 (GAPG…GMLY), 352–372 (LLLG…APIM), and 380–400 (MTGE…ASVI).

It belongs to the chloride channel (TC 2.A.49) family. ClcB subfamily.

It localises to the cell inner membrane. Its function is as follows. Probably acts as an electrical shunt for an outwardly-directed proton pump that is linked to amino acid decarboxylation, as part of the extreme acid resistance (XAR) response. This Escherichia coli O9:H4 (strain HS) protein is Voltage-gated ClC-type chloride channel ClcB.